The primary structure comprises 249 residues: 5'-nucleotidase SurE (249 aa).

Positions 8, 9, 39, and 91 each coordinate a divalent metal cation.

It belongs to the SurE nucleotidase family. The cofactor is a divalent metal cation.

The protein resides in the cytoplasm. It carries out the reaction a ribonucleoside 5'-phosphate + H2O = a ribonucleoside + phosphate. Functionally, nucleotidase that shows phosphatase activity on nucleoside 5'-monophosphates. This chain is 5'-nucleotidase SurE, found in Haemophilus influenzae (strain PittEE).